Here is a 178-residue protein sequence, read N- to C-terminus: Mediator of RNA polymerase II transcription subunit 28 (178 aa).

Residues 1–43 are disordered; it reads MAASLGGMFAGQPPGPPPPPPGLPGQASLLQAAPGAPRPSNST. The segment covering 13–23 has biased composition (pro residues); it reads PPGPPPPPPGL. The stretch at 109–145 forms a coiled coil; the sequence is QVIKEDVSELRSELQRKDALVQKHLTKLRHWQQVLED.

Belongs to the Mediator complex subunit 28 family. Forms a ternary complex with NF2/merlin and GRB2. Binds to actin. Component of the Mediator complex, which is probably composed of MED1, MED4, MED6, MED7, MED8, MED9, MED10, MED11, MED12, MED13, MED13L, MED14, MED15, MED16, MED17, MED18, MED19, MED20, MED21, MED22, MED23, MED24, MED25, MED26, MED27, MED29, MED30, MED31, CCNC, CDK8 and CDC2L6/CDK11. The MED12, MED13, CCNC and CDK8 subunits form a distinct module termed the CDK8 module. Mediator containing the CDK8 module is less active than Mediator lacking this module in supporting transcriptional activation. Individual preparations of the Mediator complex lacking one or more distinct subunits have been variously termed ARC, CRSP, DRIP, PC2, SMCC and TRAP.

It localises to the nucleus. The protein localises to the cytoplasm. Its subcellular location is the membrane. Its function is as follows. May be part of a complex containing NF2/merlin that participates in cellular signaling to the actin cytoskeleton downstream of tyrosine kinase signaling pathways. Component of the Mediator complex, a coactivator involved in the regulated transcription of nearly all RNA polymerase II-dependent genes. Mediator functions as a bridge to convey information from gene-specific regulatory proteins to the basal RNA polymerase II transcription machinery. Mediator is recruited to promoters by direct interactions with regulatory proteins and serves as a scaffold for the assembly of a functional preinitiation complex with RNA polymerase II and the general transcription factors. This chain is Mediator of RNA polymerase II transcription subunit 28 (Med28), found in Rattus norvegicus (Rat).